Reading from the N-terminus, the 479-residue chain is MAQHTVYFPDAFLTQMREAMPSTLSFDDFLAACQRPLRRSIRVNTLKISVADFLQLTAPYGWTLTPIPWCEEGFWIERDNEDALPLGSTAEHLSGLFYIQEASSMLPVAALFADGNAPQRVMDVAAAPGSKTTQIAARMNNEGAILANEFSASRVKVLHANISRCGISNVALTHFDGRVFGVAVPEMFDAILLDAPCSGEGVVRKDPDALKNWSPESNQEIAATQRELIDSAFHALRPGGTLVYSTCTLNREENEAVCMWLKETYPDAVEFLPLGELFPAANKALTEEGFLHVFPQIYDCEGFFVARLRKTQAIPALPAPKYKVGNFPFSPVKDREAGQIRQAAAGVGLNWDENLRLWQRDKELWLFPVGIEALIGKVRFSRLGIKLAETHNKGYRWQHEAVIALATPDNVNAFELTPQEAEEWYRGRDVYPQAAPVADDVLVTFQHQPIGLAKRIGSRLKNSYPRELVRDGKLFTSNA.

Residues 125–131 (AAAPGSK), E149, D176, and D194 contribute to the S-adenosyl-L-methionine site. The active-site Nucleophile is the C247.

The protein belongs to the class I-like SAM-binding methyltransferase superfamily. RsmB/NOP family.

It is found in the cytoplasm. The catalysed reaction is cytidine(1407) in 16S rRNA + S-adenosyl-L-methionine = 5-methylcytidine(1407) in 16S rRNA + S-adenosyl-L-homocysteine + H(+). Functionally, specifically methylates the cytosine at position 1407 (m5C1407) of 16S rRNA. This is Ribosomal RNA small subunit methyltransferase F from Escherichia coli (strain ATCC 8739 / DSM 1576 / NBRC 3972 / NCIMB 8545 / WDCM 00012 / Crooks).